Here is a 59-residue protein sequence, read N- to C-terminus: Large ribosomal subunit protein uL30 (59 aa).

This sequence belongs to the universal ribosomal protein uL30 family. Part of the 50S ribosomal subunit.

In Persephonella marina (strain DSM 14350 / EX-H1), this protein is Large ribosomal subunit protein uL30.